A 452-amino-acid chain; its full sequence is Agmatine coumaroyltransferase (452 aa).

Catalysis depends on proton acceptor residues H163 and D396.

Belongs to the plant acyltransferase family.

It carries out the reaction 4-coumaroyl-CoA + agmatine = N-(4-guanidinobutyl)-4-hydroxycinnamamide + CoA + H(+). Its function is as follows. Involved in the biosynthesis of hydroxycinnamic acid amides, which play a role in defense against pathogens. Agmatine is the preferred acyl acceptor, lower activity is observed towards putrescine. The preferred acyl donor is p-coumaroyl-CoA, lower activity is seen towards feruloyl-CoA. This is Agmatine coumaroyltransferase from Arabidopsis thaliana (Mouse-ear cress).